The chain runs to 361 residues: Rhomboid domain-containing protein 2 (361 aa).

5 helical membrane-spanning segments follow: residues 19 to 39 (SATF…LFLL), 63 to 83 (LVTY…AIII), 100 to 120 (CFFT…FESV), 158 to 178 (FGVV…SWLI), and 182 to 202 (SFLS…TYCY). 2 disordered regions span residues 265–287 (PSYP…PPGH) and 318–361 (PASA…VAMP). Polar residues-rich tracts occupy residues 267-276 (YPVTQMQHAS) and 318-328 (PASAGTSQGVQ).

This sequence belongs to the peptidase S54 family. As to quaternary structure, might form homotrimers; these trimers are only formed in retina. In terms of tissue distribution, widely expressed, including in retina and brain (at protein level), as well as in kidney, testis and ovary. Expressed in all layers of the retina, including inner segments of photoreceptor cells and ganglion cells (at protein level).

It is found in the golgi apparatus. The protein resides in the cis-Golgi network membrane. This is Rhomboid domain-containing protein 2 (Rhbdd2) from Mus musculus (Mouse).